A 602-amino-acid chain; its full sequence is uncharacterized protein (602 aa).

3 N-linked (GlcNAc...) asparagine glycosylation sites follow: Asn-305, Asn-497, and Asn-577.

Post-translationally, N-glycosylated.

The protein resides in the vacuole. This is an uncharacterized protein from Saccharomyces cerevisiae (strain ATCC 204508 / S288c) (Baker's yeast).